Here is a 233-residue protein sequence, read N- to C-terminus: C-type lectin domain-containing protein 87 (233 aa).

Residues 1-19 (MRFCLLVAFILPGLFLVHA) form the signal peptide. Ser-31 carries O-linked (Xyl...) (chondroitin sulfate) serine glycosylation. Asn-81 carries N-linked (GlcNAc...) asparagine glycosylation. Residues 93–223 (FADSCYWIEK…CTYMLYSICE (131 aa)) enclose the C-type lectin domain. 2 disulfides stabilise this stretch: Cys-114–Cys-222 and Cys-193–Cys-214. An N-linked (GlcNAc...) asparagine glycan is attached at Asn-225.

This is C-type lectin domain-containing protein 87 from Caenorhabditis elegans.